A 327-amino-acid polypeptide reads, in one-letter code: Aspartate--ammonia ligase (327 aa).

Belongs to the class-II aminoacyl-tRNA synthetase family. AsnA subfamily.

It is found in the cytoplasm. The enzyme catalyses L-aspartate + NH4(+) + ATP = L-asparagine + AMP + diphosphate + H(+). The protein operates within amino-acid biosynthesis; L-asparagine biosynthesis; L-asparagine from L-aspartate (ammonia route): step 1/1. This chain is Aspartate--ammonia ligase, found in Bacillus cereus (strain AH187).